A 126-amino-acid chain; its full sequence is Large ribosomal subunit protein bL17 (126 aa).

The protein belongs to the bacterial ribosomal protein bL17 family. As to quaternary structure, part of the 50S ribosomal subunit. Contacts protein L32.

This is Large ribosomal subunit protein bL17 from Laribacter hongkongensis (strain HLHK9).